Here is a 190-residue protein sequence, read N- to C-terminus: MENEGKNNMNGMEMEKGKRESRSRKGVELTMRVLALVLTMAAATVLGVAKQTKVVSIKLIPALPPLDITTTAKASYLSAFVYNISANAIACGYTAISIAILMISRGRRSKKLLMAVLLGDLVMVALLFSGTGAASAIGLMGLQGNKHVMWNKVCGVFGKFCHRAAPSLPLTFLAAVVFMFLVVLDAIKLP.

Residues 1-12 (MENEGKNNMNGM) are compositionally biased toward low complexity. The segment at 1 to 24 (MENEGKNNMNGMEMEKGKRESRSR) is disordered. Over 1–28 (MENEGKNNMNGMEMEKGKRESRSRKGVE) the chain is Cytoplasmic. Over residues 13-24 (EMEKGKRESRSR) the composition is skewed to basic and acidic residues. Residues 29–49 (LTMRVLALVLTMAAATVLGVA) traverse the membrane as a helical segment. Topologically, residues 50–83 (KQTKVVSIKLIPALPPLDITTTAKASYLSAFVYN) are extracellular. Residues 84–104 (ISANAIACGYTAISIAILMIS) traverse the membrane as a helical segment. Residues 105 to 111 (RGRRSKK) are Cytoplasmic-facing. Residues 112–132 (LLMAVLLGDLVMVALLFSGTG) traverse the membrane as a helical segment. The Extracellular portion of the chain corresponds to 133 to 163 (AASAIGLMGLQGNKHVMWNKVCGVFGKFCHR). The helical transmembrane segment at 164 to 184 (AAPSLPLTFLAAVVFMFLVVL) threads the bilayer. At 185-190 (DAIKLP) the chain is on the cytoplasmic side.

This sequence belongs to the Casparian strip membrane proteins (CASP) family. Homodimer and heterodimers.

The protein localises to the cell membrane. The polypeptide is CASP-like protein 1E2 (Arabidopsis lyrata subsp. lyrata (Lyre-leaved rock-cress)).